We begin with the raw amino-acid sequence, 436 residues long: Gamma-glutamyl phosphate reductase (436 aa).

Belongs to the gamma-glutamyl phosphate reductase family.

It is found in the cytoplasm. The enzyme catalyses L-glutamate 5-semialdehyde + phosphate + NADP(+) = L-glutamyl 5-phosphate + NADPH + H(+). The protein operates within amino-acid biosynthesis; L-proline biosynthesis; L-glutamate 5-semialdehyde from L-glutamate: step 2/2. Functionally, catalyzes the NADPH-dependent reduction of L-glutamate 5-phosphate into L-glutamate 5-semialdehyde and phosphate. The product spontaneously undergoes cyclization to form 1-pyrroline-5-carboxylate. The chain is Gamma-glutamyl phosphate reductase from Prochlorococcus marinus (strain SARG / CCMP1375 / SS120).